The chain runs to 130 residues: MRHRKSGRQLNRSSTHLNSMLKNMACSLFTHEVIKTTLSKAKELRRIVEPIITLSKIDTVSRRRLVFSRIRDNAIVAKLFKKLGPCFFSRLGGYTRILKCGFRSGDKAPMAYIELVDRVKNNKKNEILKK.

This sequence belongs to the bacterial ribosomal protein bL17 family. In terms of assembly, part of the 50S ribosomal subunit. Contacts protein L32.

This chain is Large ribosomal subunit protein bL17, found in Buchnera aphidicola subsp. Acyrthosiphon pisum (strain APS) (Acyrthosiphon pisum symbiotic bacterium).